The following is a 247-amino-acid chain: Elongation factor Ts (247 aa).

An involved in Mg(2+) ion dislocation from EF-Tu region spans residues 82-85 (TDFV).

Belongs to the EF-Ts family.

Its subcellular location is the cytoplasm. Associates with the EF-Tu.GDP complex and induces the exchange of GDP to GTP. It remains bound to the aminoacyl-tRNA.EF-Tu.GTP complex up to the GTP hydrolysis stage on the ribosome. This Arthrospira platensis (Spirulina platensis) protein is Elongation factor Ts (tsf).